A 275-amino-acid polypeptide reads, in one-letter code: Holocytochrome c-type synthase (275 aa).

Disordered stretches follow at residues 1–59 (MGLS…KTNS) and 83–102 (KENLDPSNLMPPPNQTPAPD). Gly2 carries N-myristoyl glycine lipidation. Over residues 9 to 28 (AASTVQTSTPAASDHQTAAP) the composition is skewed to polar residues. HRM repeat units follow at residues 31-36 (GCPMHE) and 41-46 (GCPVSA). The span at 48-59 (PSDSTCGSKTNS) shows a compositional bias: polar residues. Residues 91–102 (LMPPPNQTPAPD) show a composition bias toward pro residues.

This sequence belongs to the cytochrome c-type heme lyase family.

It is found in the mitochondrion inner membrane. It localises to the membrane. It catalyses the reaction holo-[cytochrome c] = apo-[cytochrome c] + heme b. In terms of biological role, lyase that catalyzes the covalent linking of the heme group to the cytochrome C apoprotein to produce the mature functional cytochrome. The chain is Holocytochrome c-type synthase from Bos taurus (Bovine).